Here is a 327-residue protein sequence, read N- to C-terminus: Malate dehydrogenase (327 aa).

11–17 (GAAGQIA) provides a ligand contact to NAD(+). Residues arginine 92 and arginine 98 each coordinate substrate. NAD(+) contacts are provided by residues asparagine 105, glutamine 112, and 128 to 130 (VGN). Residues asparagine 130 and arginine 160 each contribute to the substrate site. The active-site Proton acceptor is histidine 185.

It belongs to the LDH/MDH superfamily. MDH type 2 family.

The catalysed reaction is (S)-malate + NAD(+) = oxaloacetate + NADH + H(+). In terms of biological role, catalyzes the reversible oxidation of malate to oxaloacetate. The protein is Malate dehydrogenase of Magnetococcus marinus (strain ATCC BAA-1437 / JCM 17883 / MC-1).